The following is a 469-amino-acid chain: 3-isopropylmalate dehydratase large subunit (469 aa).

Positions 347, 408, and 411 each coordinate [4Fe-4S] cluster.

It belongs to the aconitase/IPM isomerase family. LeuC type 1 subfamily. As to quaternary structure, heterodimer of LeuC and LeuD. It depends on [4Fe-4S] cluster as a cofactor.

It carries out the reaction (2R,3S)-3-isopropylmalate = (2S)-2-isopropylmalate. The protein operates within amino-acid biosynthesis; L-leucine biosynthesis; L-leucine from 3-methyl-2-oxobutanoate: step 2/4. Functionally, catalyzes the isomerization between 2-isopropylmalate and 3-isopropylmalate, via the formation of 2-isopropylmaleate. The polypeptide is 3-isopropylmalate dehydratase large subunit (Haemophilus influenzae (strain PittEE)).